The following is a 360-amino-acid chain: 3-dehydroquinate synthase (360 aa).

Residues 105-109 (GVVGD), 129-130 (TT), lysine 142, lysine 151, and 169-172 (TLKT) contribute to the NAD(+) site. Residues glutamate 184, histidine 247, and histidine 263 each contribute to the Zn(2+) site.

This sequence belongs to the sugar phosphate cyclases superfamily. Dehydroquinate synthase family. It depends on Co(2+) as a cofactor. The cofactor is Zn(2+). NAD(+) serves as cofactor.

Its subcellular location is the cytoplasm. It carries out the reaction 7-phospho-2-dehydro-3-deoxy-D-arabino-heptonate = 3-dehydroquinate + phosphate. It participates in metabolic intermediate biosynthesis; chorismate biosynthesis; chorismate from D-erythrose 4-phosphate and phosphoenolpyruvate: step 2/7. Its function is as follows. Catalyzes the conversion of 3-deoxy-D-arabino-heptulosonate 7-phosphate (DAHP) to dehydroquinate (DHQ). The chain is 3-dehydroquinate synthase from Acetivibrio thermocellus (strain ATCC 27405 / DSM 1237 / JCM 9322 / NBRC 103400 / NCIMB 10682 / NRRL B-4536 / VPI 7372) (Clostridium thermocellum).